Consider the following 303-residue polypeptide: Probable 5-dehydro-4-deoxyglucarate dehydratase (303 aa).

The protein belongs to the DapA family.

It catalyses the reaction 5-dehydro-4-deoxy-D-glucarate + H(+) = 2,5-dioxopentanoate + CO2 + H2O. Its pathway is carbohydrate acid metabolism; D-glucarate degradation; 2,5-dioxopentanoate from D-glucarate: step 2/2. In Acinetobacter baumannii (strain SDF), this protein is Probable 5-dehydro-4-deoxyglucarate dehydratase.